A 617-amino-acid polypeptide reads, in one-letter code: Zinc finger protein 221 (617 aa).

In terms of domain architecture, KRAB spans 30-100; sequence VTFKDVAVVF…KTTSQREGNS (71 aa). C2H2-type zinc fingers lie at residues 170-192, 198-220, and 226-248; these read YRCN…QQSH, HTCG…QRVH, and YKCD…QRVH. A C2H2-type 4; degenerate zinc finger spans residues 254 to 276; sequence FKCGQCGKGFHSRSALNVHCKLH. 11 consecutive C2H2-type zinc fingers follow at residues 282-304, 310-332, 338-360, 366-388, 394-416, 422-444, 450-472, 478-500, 506-528, 534-556, and 562-584; these read YNCE…QRIH, FKCD…SMVH, FRCD…SMVH, YKCE…QMVH, YNCK…QQVH, FKCE…QRSH, YNCE…QRVH, YNCK…QRLH, FKCE…QTCH, and YKCE…QRVH.

The protein belongs to the krueppel C2H2-type zinc-finger protein family.

Its subcellular location is the nucleus. In terms of biological role, may be involved in transcriptional regulation. The protein is Zinc finger protein 221 (ZNF221) of Homo sapiens (Human).